Consider the following 987-residue polypeptide: ATP-dependent 6-phosphofructokinase subunit alpha (987 aa).

The tract at residues 1-602 is N-terminal catalytic PFK domain 1; that stretch reads MPSSSDAINR…DYRYFRDISI (602 aa). Residues G237, 300–301, and 330–333 each bind ATP; these read RC and GDGS. Mg(2+) is bound at residue D331. Beta-D-fructose 6-phosphate is bound by residues 376–378, R413, 420–422, E477, R504, and 510–513; these read SID, MGR, and HVQR. The active-site Proton acceptor is D378. The tract at residues 603–616 is interdomain linker; sequence YDDGSKQLSEDKRL. Residues 617-987 are C-terminal regulatory PFK domain 2; the sequence is NIAIVHVGAA…KSLLKKQERY (371 aa). Residues R686, 743–747, R781, 788–790, E848, R874, 880–883, and R958 contribute to the beta-D-fructose 2,6-bisphosphate site; these read TVSNN, QGG, and HVQQ.

It belongs to the phosphofructokinase type A (PFKA) family. ATP-dependent PFK group I subfamily. Eukaryotic two domain clade 'E' sub-subfamily. As to quaternary structure, heterooctamer of 4 alpha and 4 beta chains. Mg(2+) is required as a cofactor.

It is found in the cytoplasm. It catalyses the reaction beta-D-fructose 6-phosphate + ATP = beta-D-fructose 1,6-bisphosphate + ADP + H(+). Its pathway is carbohydrate degradation; glycolysis; D-glyceraldehyde 3-phosphate and glycerone phosphate from D-glucose: step 3/4. Its activity is regulated as follows. Allosterically activated by ADP, AMP, or fructose 2,6-bisphosphate, and allosterically inhibited by ATP or citrate. In terms of biological role, catalyzes the phosphorylation of D-fructose 6-phosphate to fructose 1,6-bisphosphate by ATP, the first committing step of glycolysis. The chain is ATP-dependent 6-phosphofructokinase subunit alpha (PFK1) from Candida albicans (Yeast).